The chain runs to 264 residues: Phosphonoacetaldehyde hydrolase (264 aa).

Aspartate 9 serves as the catalytic Nucleophile. The Mg(2+) site is built by aspartate 9 and alanine 11. The Schiff-base intermediate with substrate role is filled by lysine 50. Aspartate 183 is a binding site for Mg(2+).

It belongs to the HAD-like hydrolase superfamily. PhnX family. Homodimer. Requires Mg(2+) as cofactor.

It carries out the reaction phosphonoacetaldehyde + H2O = acetaldehyde + phosphate + H(+). In terms of biological role, involved in phosphonate degradation. The protein is Phosphonoacetaldehyde hydrolase of Bacillus cytotoxicus (strain DSM 22905 / CIP 110041 / 391-98 / NVH 391-98).